Here is a 420-residue protein sequence, read N- to C-terminus: 3-oxoacyl-[acyl-carrier-protein] synthase 2 (420 aa).

The region spanning 13–419 is the Ketosynthase family 3 (KS3) domain; the sequence is FPNVVVTGIA…GHNVAIAFGC (407 aa). Catalysis depends on for beta-ketoacyl synthase activity residues Cys-173, His-314, and His-349.

The protein belongs to the thiolase-like superfamily. Beta-ketoacyl-ACP synthases family.

The protein resides in the cytoplasm. The catalysed reaction is an ultra-long-chain di-unsaturated fatty acyl-[ACP] + malonyl-[ACP] + H(+) = a 3-oxo-ultra-long-chain di-unsaturated fatty acyl-[ACP] + holo-[ACP] + CO2. It participates in lipid metabolism; mycolic acid biosynthesis. Its function is as follows. Part of the mycobacterial fatty acid elongation system FAS-II, which is involved in mycolic acid biosynthesis. Catalyzes the elongation of long chain acyl-ACP substrates by the addition of two carbons from malonyl-ACP to an acyl acceptor. Involved in extension of the mycolate chains to full lengths and produces longer chain multiunsaturated hydrocarbons averaging 54 carbons in length. This is 3-oxoacyl-[acyl-carrier-protein] synthase 2 (kasB) from Mycobacterium leprae (strain TN).